Consider the following 250-residue polypeptide: MLLIPAIDLKDGQCVRLKQGDMDQATIFHEEPAVMARHWVDRGARRLHLVDLNGAFAGKPKNEDAIRAIIEEVGGEIPVQLGGGIRDLNTIERYLDDGLEYVIIGTAAVKNPGFLLEACTAFGGHIIVGLDAKDGKVATDGWSKLTGHEVADLARKFEDYGCESIIYTDIGRDGMLQGINIEATVRLARAVKIPVIASGGLSNLGDIEALCEVEDEGIEGVICGRAIYSGDLDFAAAQTHADRLRESDDA.

The active-site Proton acceptor is the D8. The Proton donor role is filled by D131.

This sequence belongs to the HisA/HisF family.

The protein localises to the cytoplasm. The catalysed reaction is 1-(5-phospho-beta-D-ribosyl)-5-[(5-phospho-beta-D-ribosylamino)methylideneamino]imidazole-4-carboxamide = 5-[(5-phospho-1-deoxy-D-ribulos-1-ylimino)methylamino]-1-(5-phospho-beta-D-ribosyl)imidazole-4-carboxamide. It participates in amino-acid biosynthesis; L-histidine biosynthesis; L-histidine from 5-phospho-alpha-D-ribose 1-diphosphate: step 4/9. This Paraburkholderia phymatum (strain DSM 17167 / CIP 108236 / LMG 21445 / STM815) (Burkholderia phymatum) protein is 1-(5-phosphoribosyl)-5-[(5-phosphoribosylamino)methylideneamino] imidazole-4-carboxamide isomerase.